Reading from the N-terminus, the 189-residue chain is MSHMPELEASVLPADAVEVGRIADAWGIKGWFKVAAFSADPEALFTAKQWYLQPPEKGARQFTGTVLLPVKQARVHSDSVVATSPVVNDRNTAEALRGARIFVARSDFPQPEDGEYYWVDLLGLSVVNREGVVLGVVRDLLSTGPQTVLVLAYEEDGKERERMIPFVDAYVDKVDLPGKTIVADWQPDY.

In terms of domain architecture, PRC barrel spans 113-189; it reads DGEYYWVDLL…TIVADWQPDY (77 aa).

Belongs to the RimM family. As to quaternary structure, binds ribosomal protein uS19.

It localises to the cytoplasm. An accessory protein needed during the final step in the assembly of 30S ribosomal subunit, possibly for assembly of the head region. Essential for efficient processing of 16S rRNA. May be needed both before and after RbfA during the maturation of 16S rRNA. It has affinity for free ribosomal 30S subunits but not for 70S ribosomes. In Delftia acidovorans (strain DSM 14801 / SPH-1), this protein is Ribosome maturation factor RimM.